Reading from the N-terminus, the 457-residue chain is tRNA (guanine(37)-N(1))-methyltransferase (457 aa).

Residues His-240, 278-279, 306-307, and Asn-338 each bind S-adenosyl-L-methionine; these read DL and DG.

Belongs to the class I-like SAM-binding methyltransferase superfamily. TRM5/TYW2 family. As to quaternary structure, monomer.

The protein resides in the mitochondrion matrix. The protein localises to the nucleus. It localises to the cytoplasm. It catalyses the reaction guanosine(37) in tRNA + S-adenosyl-L-methionine = N(1)-methylguanosine(37) in tRNA + S-adenosyl-L-homocysteine + H(+). In terms of biological role, specifically methylates the N1 position of guanosine-37 in various cytoplasmic and mitochondrial tRNAs. Methylation is not dependent on the nature of the nucleoside 5' of the target nucleoside. This is the first step in the biosynthesis of wybutosine (yW), a modified base adjacent to the anticodon of tRNAs and required for accurate decoding. In Drosophila melanogaster (Fruit fly), this protein is tRNA (guanine(37)-N(1))-methyltransferase.